A 144-amino-acid polypeptide reads, in one-letter code: Transcriptional regulator MraZ (144 aa).

SpoVT-AbrB domains follow at residues 5–47 (TYTP…PRAE) and 77–120 (TDEQ…DAQA).

It belongs to the MraZ family. As to quaternary structure, forms oligomers.

The protein resides in the cytoplasm. It localises to the nucleoid. The chain is Transcriptional regulator MraZ from Mycolicibacterium gilvum (strain PYR-GCK) (Mycobacterium gilvum (strain PYR-GCK)).